The sequence spans 745 residues: Copper-transporting ATPase (745 aa).

In terms of domain architecture, HMA spans 1 to 67; it reads MKESFYIEGM…LIEKLGYSPK (67 aa). At 1–83 the chain is on the cytoplasmic side; that stretch reads MKESFYIEGM…KKEFFSPNVK (83 aa). Positions 12 and 15 each coordinate Cu cation. Residues 84–104 form a helical membrane-spanning segment; sequence LALAVIFTLFVVYLSMGAMLS. Over 105-124 the chain is Extracellular; the sequence is PSLLPKSLLAIDNHSNFLNA. Residues 125-144 traverse the membrane as a helical segment; sequence CLQLIGTLIVMHWGRDFYIQ. The Cytoplasmic segment spans residues 145–151; sequence GFKALWH. A helical transmembrane segment spans residues 152–172; it reads RQPNMSSLIAIGTSAALISSL. The Extracellular segment spans residues 173-194; it reads WQLYLVYTDHYTDQWSYGHYYF. The chain crosses the membrane as a helical span at residues 195-215; the sequence is ESVCVILMFVMVGKRIENVSK. The Cytoplasmic portion of the chain corresponds to 216-343; it reads DKALDAMQAL…KAEISRLADK (128 aa). Residues 344–366 form a helical membrane-spanning segment; sequence VSSVFVPSVIAIAILAFVVWLII. The Extracellular portion of the chain corresponds to 367–379; that stretch reads APKPDFWWNFGIA. Residues 380–397 traverse the membrane as a helical segment; sequence LEVFVSVLVISCPCALGL. Residues 398–685 lie on the Cytoplasmic side of the membrane; the sequence is ATLMSILVAN…KLSQATIKNI (288 aa). Residue aspartate 435 is the 4-aspartylphosphate intermediate of the active site. Aspartate 631 and aspartate 635 together coordinate Mg(2+). A helical membrane pass occupies residues 686 to 705; that stretch reads KENLFWAFCYNSVFIPLACG. The Extracellular segment spans residues 706 to 716; sequence VLYKANIMLSP. A helical membrane pass occupies residues 717–735; it reads AIAGLAMSLSSVSVVLNSQ. The Cytoplasmic portion of the chain corresponds to 736–745; it reads RLRNFKIKDH.

Belongs to the cation transport ATPase (P-type) (TC 3.A.3) family. Type IB subfamily.

The protein localises to the cell membrane. The enzyme catalyses Cu(2+)(in) + ATP + H2O = Cu(2+)(out) + ADP + phosphate + H(+). Probably involved in copper export. This is Copper-transporting ATPase (copA) from Helicobacter pylori (Campylobacter pylori).